A 359-amino-acid polypeptide reads, in one-letter code: ATP-dependent (S)-NAD(P)H-hydrate dehydratase (359 aa).

Residues 61–350 (LLEEARKVVP…SEINSVFVNN (290 aa)) form the YjeF C-terminal domain. (6S)-NADPHX-binding positions include Gly-161 and 214–220 (NVVEFQR). ATP-binding positions include 256 to 260 (KGEVD) and 275 to 284 (GSPRRCGGQG). Asp-285 lines the (6S)-NADPHX pocket.

Belongs to the NnrD/CARKD family. Requires Mg(2+) as cofactor.

The enzyme catalyses (6S)-NADHX + ATP = ADP + phosphate + NADH + H(+). The catalysed reaction is (6S)-NADPHX + ATP = ADP + phosphate + NADPH + H(+). Its function is as follows. Catalyzes the dehydration of the S-form of NAD(P)HX at the expense of ATP, which is converted to ADP. Together with NAD(P)HX epimerase, which catalyzes the epimerization of the S- and R-forms, the enzyme allows the repair of both epimers of NAD(P)HX, a damaged form of NAD(P)H that is a result of enzymatic or heat-dependent hydration. The polypeptide is ATP-dependent (S)-NAD(P)H-hydrate dehydratase (Ciona intestinalis (Transparent sea squirt)).